Reading from the N-terminus, the 352-residue chain is tRNA pseudouridine synthase D (352 aa).

The active-site Nucleophile is the Asp81. The TRUD domain maps to Gly157–Leu303.

It belongs to the pseudouridine synthase TruD family.

The catalysed reaction is uridine(13) in tRNA = pseudouridine(13) in tRNA. Responsible for synthesis of pseudouridine from uracil-13 in transfer RNAs. This chain is tRNA pseudouridine synthase D, found in Ectopseudomonas mendocina (strain ymp) (Pseudomonas mendocina).